Consider the following 436-residue polypeptide: 3-ketoacyl-CoA thiolase (436 aa).

The Acyl-thioester intermediate role is filled by C99. Residues H392 and C422 each act as proton acceptor in the active site.

This sequence belongs to the thiolase-like superfamily. Thiolase family. Heterotetramer of two alpha chains (FadJ) and two beta chains (FadI).

The protein localises to the cytoplasm. It catalyses the reaction an acyl-CoA + acetyl-CoA = a 3-oxoacyl-CoA + CoA. Its pathway is lipid metabolism; fatty acid beta-oxidation. Catalyzes the final step of fatty acid oxidation in which acetyl-CoA is released and the CoA ester of a fatty acid two carbons shorter is formed. The sequence is that of 3-ketoacyl-CoA thiolase from Salmonella typhimurium (strain LT2 / SGSC1412 / ATCC 700720).